Here is a 704-residue protein sequence, read N- to C-terminus: Polyribonucleotide nucleotidyltransferase (704 aa).

Mg(2+)-binding residues include aspartate 488 and aspartate 494. Residues 555-614 enclose the KH domain; the sequence is PRITTLKINPEKIRDVIGKGGATIRALTEETGTTIELEDDGTVKIASANGDATKEAIRRI. One can recognise an S1 motif domain in the interval 624–692; sequence GTIYNGKVVR…RQGRVRLSMK (69 aa).

This sequence belongs to the polyribonucleotide nucleotidyltransferase family. Component of the RNA degradosome, which is a multiprotein complex involved in RNA processing and mRNA degradation. Requires Mg(2+) as cofactor.

It localises to the cytoplasm. The enzyme catalyses RNA(n+1) + phosphate = RNA(n) + a ribonucleoside 5'-diphosphate. Functionally, involved in mRNA degradation. Catalyzes the phosphorolysis of single-stranded polyribonucleotides processively in the 3'- to 5'-direction. This Shewanella sediminis (strain HAW-EB3) protein is Polyribonucleotide nucleotidyltransferase.